The primary structure comprises 213 residues: Peroxiredoxin-5, mitochondrial (213 aa).

Residues 1–51 constitute a mitochondrion transit peptide; it reads MVQLRFCVLGSIAGSVLRASATWTCVAGRAGRKGAGWECGGARSFSSAAVT. One can recognise a Thioredoxin domain in the interval 55-213; that stretch reads IKVGDTIPSV…SLAPNILSQL (159 aa). The residue at position 74 (Lys74) is an N6-acetyllysine. At Lys82 the chain carries N6-acetyllysine; alternate. Lys82 carries the post-translational modification N6-succinyllysine; alternate. The active-site Cysteine sulfenic acid (-SOH) intermediate is the Cys99. A lipid anchor (S-palmitoyl cysteine) is attached at Cys99. An intrachain disulfide couples Cys99 to Cys203. The residue at position 115 (Lys115) is an N6-succinyllysine. A phosphoserine mark is found at Ser170 and Ser181. The Microbody targeting signal signature appears at 211–213; it reads SQL.

Belongs to the peroxiredoxin family. Prx5 subfamily. In terms of assembly, monomer. Post-translationally, S-palmitoylated. Palmitoylation occurs on the active site, inhibiting its reactivity; therefore PRDX5 palmitoylation status determines its antioxidant capacity. In terms of processing, S-palmitoylated. Depalmitoylated by ABHD10.

The protein resides in the mitochondrion. It localises to the cytoplasm. Its subcellular location is the peroxisome matrix. The enzyme catalyses a hydroperoxide + [thioredoxin]-dithiol = an alcohol + [thioredoxin]-disulfide + H2O. Thiol-specific peroxidase that catalyzes the reduction of hydrogen peroxide and organic hydroperoxides to water and alcohols, respectively. Plays a role in cell protection against oxidative stress by detoxifying peroxides and as sensor of hydrogen peroxide-mediated signaling events. The sequence is that of Peroxiredoxin-5, mitochondrial from Rattus norvegicus (Rat).